A 3411-amino-acid chain; its full sequence is Genome polyprotein (3411 aa).

Topologically, residues 1-104 are cytoplasmic; that stretch reads MSGRKAQGKT…LSSRKRRSHD (104 aa). Positions 102–121 are cleaved as a propeptide — ER anchor for the capsid protein C, removed in mature form by serine protease NS3; the sequence is SHDALAVQFLILGMLLMAGG. A helical transmembrane segment spans residues 105–125; that stretch reads ALAVQFLILGMLLMAGGVTLV. Over 126–244 the chain is Extracellular; sequence RKNRWLLLNV…GERQLQKIER (119 aa). N-linked (GlcNAc...) asparagine; by host glycans are attached at residues asparagine 134 and asparagine 150. The chain crosses the membrane as a helical span at residues 245–265; sequence WLVRNPFFAVTALTIAYLVGS. Residues 266–270 are Cytoplasmic-facing; the sequence is NMTQR. Residues 271–285 traverse the membrane as a helical segment; sequence VVIALLVLAVGPAYS. Over 286–730 the chain is Extracellular; that stretch reads AHCIGITDRD…TVFGSAFQGL (445 aa). Cystine bridges form between cysteine 288–cysteine 315, cysteine 345–cysteine 401, cysteine 345–cysteine 406, cysteine 359–cysteine 390, cysteine 377–cysteine 401, cysteine 377–cysteine 406, cysteine 467–cysteine 568, and cysteine 585–cysteine 615. The tract at residues 383-396 is fusion peptide; sequence DRGWGNGCGLFGKG. The helical transmembrane segment at 731-751 threads the bilayer; the sequence is FGGLSWITKVIMGAVLIWVGI. Residues 752–757 are Extracellular-facing; that stretch reads NTRNMT. Residues 758–778 traverse the membrane as a helical segment; that stretch reads MSMSMILVGVIMMFLSLGVGA. Over 779 to 1132 the chain is Extracellular; sequence DQGCAINFGK…LVRSWVTAGE (354 aa). 6 cysteine pairs are disulfide-bonded: cysteine 782/cysteine 793, cysteine 833/cysteine 921, cysteine 957/cysteine 1002, cysteine 1058/cysteine 1107, cysteine 1069/cysteine 1091, and cysteine 1090/cysteine 1094. N-linked (GlcNAc...) asparagine; by host glycosylation is found at asparagine 908 and asparagine 986. Residues 1133–1153 traverse the membrane as a helical segment; it reads IHAVPFGLVSMMIAMEVVLRK. Residues 1154-1201 lie on the Cytoplasmic side of the membrane; the sequence is RQGPKQMLVGGVVLLGAMLVGQVTLLDLLKLTVAVGLHFHEMNNGGDA. The helical transmembrane segment at 1202–1222 threads the bilayer; it reads MYMALIAAFSIRPGLLIGFGL. Residues 1223–1287 are Lumenal-facing; the sequence is RTLWSPRERL…ILPLMALLTP (65 aa). Residues 1288–1308 form a helical membrane-spanning segment; sequence VTMAEVRLAAMLFCTVVIIGV. Topologically, residues 1309–1355 are cytoplasmic; the sequence is LHQNSKDTSMQKTIPLVALTLTSYLGLTQPFLGLCAFLATRLFGRRS. The helical transmembrane segment at 1356–1376 threads the bilayer; it reads IPVNEALAAAGLVGVLAGLAF. Residues 1377–1378 lie on the Lumenal side of the membrane; that stretch reads QE. Residues 1379 to 1399 traverse the membrane as a helical segment; sequence MENFLGPIAVGGILMMLVSVA. Residues 1400–1456 are Cytoplasmic-facing; it reads GRVDGLELRKLGEVSWEEEAEISGSSARYDVALSEQGEFKLLSEEKVPWDQVVMTSL. An interacts with and activates NS3 protease region spans residues 1407–1446; that stretch reads LRKLGEVSWEEEAEISGSSARYDVALSEQGEFKLLSEEKV. Residues 1457–1477 constitute an intramembrane region (helical); the sequence is ALVGAAIHPFALLLVLAGWLF. Residues 1478–2157 lie on the Cytoplasmic side of the membrane; it reads HVKGARRSGD…RNALSMMPEA (680 aa). The 181-residue stretch at 1485 to 1665 folds into the Peptidase S7 domain; sequence SGDVLWDIPT…EVKEEGKEEL (181 aa). Catalysis depends on charge relay system; for serine protease NS3 activity residues histidine 1537, aspartate 1561, and serine 1622. Residues 1669–1825 form the Helicase ATP-binding domain; it reads PTMLKKGMTT…HSNGEIEDVQ (157 aa). Residues 1673-1676 form an important for RNA-binding region; the sequence is KKGM. Position 1682–1689 (1682–1689) interacts with ATP; that stretch reads FHPGAGKT. Residues 1773 to 1776 carry the DEAH box motif; it reads DEAH. A Helicase C-terminal domain is found at 1820–1997; sequence EIEDVQTDIP…VRGGMVAPLY (178 aa). Lysine 1877 carries the post-translational modification N6-acetyllysine; by host. A disordered region spans residues 1942 to 1961; sequence AAQRRGRIGRNPNRDGDSYY. A helical membrane pass occupies residues 2158–2178; sequence MTIAMLFILAGLLTSGMVIFF. Residues 2179-2186 are Lumenal-facing; the sequence is MSPKGISR. An intramembrane region (helical) is located at residues 2187 to 2207; the sequence is MSMAMGTMAGCGYLMFLGGVK. Residues 2208 to 2209 are Lumenal-facing; that stretch reads PT. The chain crosses the membrane as a helical span at residues 2210–2230; sequence HISYIMLIFFVLMVVVIPEPG. Topologically, residues 2231–2241 are cytoplasmic; the sequence is QQRSIQDNQVA. The helical transmembrane segment at 2242 to 2262 threads the bilayer; the sequence is YLIIGILTLVSVVAANELGML. Over 2263 to 2293 the chain is Lumenal; sequence EKTKEDLFGKKDLIPSSASPWSWPDLDLKPG. The helical intramembrane region spans 2294-2314; it reads AAWTVYVGIVTMLSPMLHHWI. Topologically, residues 2315-2360 are lumenal; it reads KVEYGNLSLSGIAQSASVLSFMDKGIPFMKMNISVIILLVSGWNSI. The helical transmembrane segment at 2361-2380 threads the bilayer; that stretch reads TVMPLLCGIGCAMLHWSLIL. Topologically, residues 2381–2421 are cytoplasmic; it reads PGIKAQQSKLAQRRVFHGVAKNPVVDGNPTVDIEEAPEMPA. Residues 2422–2442 traverse the membrane as a helical segment; it reads LYEKKLALYLLLALSLASVAM. Residues 2443 to 2445 are Lumenal-facing; it reads CRT. A helical membrane pass occupies residues 2446-2466; the sequence is PFSLAEGIVLASAALGPLIEG. The Cytoplasmic segment spans residues 2467-3411; it reads NTSLLWNGPM…DADLQPGELI (945 aa). Residues 2507–2771 form the mRNA cap 0-1 NS5-type MT domain; the sequence is GRANGKTLGE…DVILPIGTRS (265 aa). S-adenosyl-L-methionine is bound at residue serine 2562. Serine 2562 bears the Phosphoserine mark. Lysine 2567 serves as the catalytic For 2'-O-MTase activity. S-adenosyl-L-methionine is bound by residues glycine 2592, tryptophan 2593, threonine 2610, leucine 2611, aspartate 2637, and isoleucine 2638. Catalysis depends on aspartate 2652, which acts as the For 2'-O-MTase activity. Isoleucine 2653 provides a ligand contact to S-adenosyl-L-methionine. Residues lysine 2688 and glutamate 2724 each act as for 2'-O-MTase activity in the active site. Tyrosine 2726 provides a ligand contact to S-adenosyl-L-methionine. Residues 2878–2911 carry the Nuclear localization signal motif; the sequence is RKIMKVVNRWLFRHLAREKNPRLCTKEEFIAKVR. The Zn(2+) site is built by glutamate 2945, histidine 2949, cysteine 2954, and cysteine 2957. In terms of domain architecture, RdRp catalytic spans 3035-3187; the sequence is GGFYADDTAG…RPIDDRFGLA (153 aa). Residues histidine 3222, cysteine 3238, and cysteine 3357 each coordinate Zn(2+).

This sequence in the N-terminal section; belongs to the class I-like SAM-binding methyltransferase superfamily. mRNA cap 0-1 NS5-type methyltransferase family. Homodimer. Interacts (via N-terminus) with host EXOC1 (via C-terminus); this interaction results in EXOC1 degradation through the proteasome degradation pathway. As to quaternary structure, forms heterodimers with envelope protein E in the endoplasmic reticulum and Golgi. In terms of assembly, homodimer; in the endoplasmic reticulum and Golgi. Interacts with protein prM. Interacts with non-structural protein 1. Homodimer; Homohexamer when secreted. Interacts with envelope protein E. As to quaternary structure, interacts (via N-terminus) with serine protease NS3. In terms of assembly, forms a heterodimer with serine protease NS3. May form homooligomers. Forms a heterodimer with NS2B. Interacts with non-structural protein 2A (via N-terminus). Interacts with NS4B. Interacts with unphosphorylated RNA-directed RNA polymerase NS5; this interaction stimulates RNA-directed RNA polymerase NS5 guanylyltransferase activity. NS3 interacts with host PDCD6IP; this interaction contributes to virion release. As to quaternary structure, interacts with serine protease NS3. In terms of assembly, homodimer. Interacts with host STAT2; this interaction prevents the establishment of cellular antiviral state. Interacts with serine protease NS3. Interacts with host TRIM23; this interaction leads to NS5 ubiquitination. In terms of processing, specific enzymatic cleavages in vivo yield mature proteins. The nascent capsid protein C contains a C-terminal hydrophobic domain that act as a signal sequence for translocation of prM into the lumen of the ER. Mature capsid protein C is cleaved at a site upstream of this hydrophobic domain by NS3. prM is cleaved in post-Golgi vesicles by a host furin, releasing the mature small envelope protein M, and peptide pr. Non-structural protein 2A-alpha, a C-terminally truncated form of non-structural protein 2A, results from partial cleavage by NS3. Specific enzymatic cleavages in vivo yield mature proteins peptide 2K acts as a signal sequence and is removed from the N-terminus of NS4B by the host signal peptidase in the ER lumen. Signal cleavage at the 2K-4B site requires a prior NS3 protease-mediated cleavage at the 4A-2K site. Cleaved in post-Golgi vesicles by a host furin, releasing the mature small envelope protein M, and peptide pr. This cleavage is incomplete as up to 30% of viral particles still carry uncleaved prM. Post-translationally, N-glycosylated. In terms of processing, N-glycosylated. The excreted form is glycosylated and this is required for efficient secretion of the protein from infected cells. Polyubiquitinated; ubiquitination is probably mediated by host TRIM23 and is prerequisite for NS5-STAT2 interaction. NS5 is not ISGylated or sumoylated. Post-translationally, acetylated by host KAT5. Acetylation modulates NS3 RNA-binding and unwinding activities and plays an important positive role for viral replication. In terms of processing, phosphorylated on serines residues. This phosphorylation may trigger NS5 nuclear localization.

The protein localises to the virion. The protein resides in the host nucleus. Its subcellular location is the host cytoplasm. It is found in the host perinuclear region. It localises to the secreted. The protein localises to the virion membrane. The protein resides in the host endoplasmic reticulum membrane. It carries out the reaction Selective hydrolysis of -Xaa-Xaa-|-Yaa- bonds in which each of the Xaa can be either Arg or Lys and Yaa can be either Ser or Ala.. The catalysed reaction is RNA(n) + a ribonucleoside 5'-triphosphate = RNA(n+1) + diphosphate. It catalyses the reaction a ribonucleoside 5'-triphosphate + H2O = a ribonucleoside 5'-diphosphate + phosphate + H(+). The enzyme catalyses ATP + H2O = ADP + phosphate + H(+). It carries out the reaction a 5'-end (5'-triphosphoguanosine)-ribonucleoside in mRNA + S-adenosyl-L-methionine = a 5'-end (N(7)-methyl 5'-triphosphoguanosine)-ribonucleoside in mRNA + S-adenosyl-L-homocysteine. The catalysed reaction is a 5'-end (N(7)-methyl 5'-triphosphoguanosine)-ribonucleoside in mRNA + S-adenosyl-L-methionine = a 5'-end (N(7)-methyl 5'-triphosphoguanosine)-(2'-O-methyl-ribonucleoside) in mRNA + S-adenosyl-L-homocysteine + H(+). In terms of biological role, plays a role in virus budding by binding to the cell membrane and gathering the viral RNA into a nucleocapsid that forms the core of a mature virus particle. During virus entry, may induce genome penetration into the host cytoplasm after hemifusion induced by the surface proteins. Can migrate to the cell nucleus where it modulates host functions. Inhibits RNA silencing by interfering with host Dicer. Functionally, prevents premature fusion activity of envelope proteins in trans-Golgi by binding to envelope protein E at pH6.0. After virion release in extracellular space, gets dissociated from E dimers. Its function is as follows. Acts as a chaperone for envelope protein E during intracellular virion assembly by masking and inactivating envelope protein E fusion peptide. prM is the only viral peptide matured by host furin in the trans-Golgi network probably to avoid catastrophic activation of the viral fusion activity in acidic Golgi compartment prior to virion release. prM-E cleavage is inefficient, and many virions are only partially matured. These uncleaved prM would play a role in immune evasion. In terms of biological role, may play a role in virus budding. Exerts cytotoxic effects by activating a mitochondrial apoptotic pathway through M ectodomain. May display a viroporin activity. Binds to host cell surface receptor and mediates fusion between viral and cellular membranes. Envelope protein is synthesized in the endoplasmic reticulum in the form of heterodimer with protein prM. They play a role in virion budding in the ER, and the newly formed immature particle is covered with 60 spikes composed of heterodimer between precursor prM and envelope protein E. The virion is transported to the Golgi apparatus where the low pH causes dissociation of PrM-E heterodimers and formation of E homodimers. prM-E cleavage is inefficient, and many virions are only partially matured. These uncleaved prM would play a role in immune evasion. Functionally, involved in immune evasion, pathogenesis and viral replication. Once cleaved off the polyprotein, is targeted to three destinations: the viral replication cycle, the plasma membrane and the extracellular compartment. Essential for viral replication. Required for formation of the replication complex and recruitment of other non-structural proteins to the ER-derived membrane structures. Excreted as a hexameric lipoparticle that plays a role against host immune response. Antagonizing the complement function. Binds to the host macrophages and dendritic cells. Inhibits signal transduction originating from Toll-like receptor 3 (TLR3). Its function is as follows. Component of the viral RNA replication complex that functions in virion assembly and antagonizes the host immune response. In terms of biological role, required cofactor for the serine protease function of NS3. May have membrane-destabilizing activity and form viroporins. Displays three enzymatic activities: serine protease, NTPase and RNA helicase. NS3 serine protease, in association with NS2B, performs its autocleavage and cleaves the polyprotein at dibasic sites in the cytoplasm: C-prM, NS2A-NS2B, NS2B-NS3, NS3-NS4A, NS4A-2K and NS4B-NS5. NS3 RNA helicase binds RNA and unwinds dsRNA in the 3' to 5' direction. Also plays a role in virus assembly. Functionally, regulates the ATPase activity of the NS3 helicase activity. NS4A allows NS3 helicase to conserve energy during unwinding. Its function is as follows. Functions as a signal peptide for NS4B and is required for the interferon antagonism activity of the latter. In terms of biological role, induces the formation of ER-derived membrane vesicles where the viral replication takes place. Inhibits interferon (IFN)-induced host STAT1 phosphorylation and nuclear translocation, thereby preventing the establishment of cellular antiviral state by blocking the IFN-alpha/beta pathway. Replicates the viral (+) and (-) RNA genome, and performs the capping of genomes in the cytoplasm. NS5 methylates viral RNA cap at guanine N-7 and ribose 2'-O positions. Besides its role in RNA genome replication, also prevents the establishment of cellular antiviral state by blocking the interferon-alpha/beta (IFN-alpha/beta) signaling pathway. IFN-I induces binding of NS5 to host IFN-activated transcription factor STAT2, preventing its transcriptional activity. Host TRIM23 is the E3 ligase that interacts with and polyubiquitinates NS5 to promote its binding to STAT2 and trigger IFN-I signaling inhibition. The chain is Genome polyprotein from Yellow fever virus (isolate Ivory Coast/1999) (YFV).